Consider the following 563-residue polypeptide: Methylcrotonoyl-CoA carboxylase beta chain, mitochondrial (563 aa).

The N-terminal 22 residues, 1–22 (MWGALRSVLRPCSRASVPRQRA), are a transit peptide targeting the mitochondrion. Residues 49 to 306 (MKALVNQLHE…QKKLDVTVEP (258 aa)) form the CoA carboxyltransferase N-terminal domain. The segment at 49–555 (MKALVNQLHE…SAALNAPIQR (507 aa)) is carboxyltransferase. The residue at position 70 (K70) is an N6-acetyllysine; alternate. Residue K70 is modified to N6-succinyllysine; alternate. Residue K141 is modified to N6-succinyllysine. The CoA carboxyltransferase C-terminal domain occupies 309–555 (EPLFPADELY…SAALNAPIQR (247 aa)). The tract at residues 343–372 (RFNEFKALYGDTLVTGFARIFGYPVGIIGN) is acyl-CoA binding. Residue K433 is modified to N6-succinyllysine. Residue K495 is modified to N6-acetyllysine; alternate. At K495 the chain carries N6-succinyllysine; alternate. K511 carries the post-translational modification N6-acetyllysine.

Belongs to the AccD/PCCB family. In terms of assembly, probably a dodecamer composed of six biotin-containing alpha subunits (MCCC1) and six beta (MCCC2) subunits.

The protein localises to the mitochondrion matrix. The catalysed reaction is 3-methylbut-2-enoyl-CoA + hydrogencarbonate + ATP = 3-methyl-(2E)-glutaconyl-CoA + ADP + phosphate + H(+). It functions in the pathway amino-acid degradation; L-leucine degradation; (S)-3-hydroxy-3-methylglutaryl-CoA from 3-isovaleryl-CoA: step 2/3. Its function is as follows. Carboxyltransferase subunit of the 3-methylcrotonyl-CoA carboxylase, an enzyme that catalyzes the conversion of 3-methylcrotonyl-CoA to 3-methylglutaconyl-CoA, a critical step for leucine and isovaleric acid catabolism. The polypeptide is Methylcrotonoyl-CoA carboxylase beta chain, mitochondrial (Mccc2) (Rattus norvegicus (Rat)).